Reading from the N-terminus, the 640-residue chain is MAEVAEVAAESGGGGDSGVGACERGVAPIKAQYRTTKERFHEYLDADKQEGACQETPTEGPAEPEAKRIRLEDGQENGKTEVAVESHERQVPKRARGQNKSRPHMKPAHYDKERLCPSLLQESATPCAFGDRCRFLHDVGRYLETKPADLGPHCVLFNTFGRCPYSMTCRFAGAHLGPEGQNLVQEEVVARCAQLPSVRNGLDRALQQQLRKRQVCFERAEQALSHLTQGPMPTIAPESTVATLTPKHSSCHVQLDNVGGDGARQGSPVPTCGPLTDEDVVRLRPCEKKRLDISGKLYLAPLTTCGNLPFRRICKRFGADVTCGEMAMCTNLLQGQMSEWALLKRHPCEDIFGVQLEGAFPDTMTKCAELLNRTIDVDFVDINVGCPIDLVYKKGGGCALMNRSAKFQQIVRGMNEVLDVPLTVKMRTGVQERVSLAHRLLPELRNWGVALVTLHGRSREQRYTRLADWPYIEQCAKVASPMPLFGNGDILSFEDANCAMQTGVAGIMVARGALLKPWLFTEIKEQRHWDISSSERLDILRDFTHYGLEHWGSDTQGVERTRRFLLEWLSFLCRYVPVGLLERLPQRINERPPYYLGRDYLETLMASQQAADWIRISEMLLGPVPPGFVFLPKHKANAYK.

Residues 1 to 10 (MAEVAEVAAE) are compositionally biased toward low complexity. Disordered stretches follow at residues 1–22 (MAEV…VGAC) and 47–106 (DKQE…PHMK). A2 bears the N-acetylalanine mark. Residues 64–91 (PEAKRIRLEDGQENGKTEVAVESHERQV) show a composition bias toward basic and acidic residues. Positions 92-106 (PKRARGQNKSRPHMK) are enriched in basic residues. 2 consecutive C3H1-type zinc fingers follow at residues 110 to 140 (YDKE…HDVG) and 148 to 178 (ADLG…HLGP). At S267 the chain carries Phosphoserine. Residues 301 to 303 (PLT) and Q355 contribute to the FMN site. Catalysis depends on C386, which acts as the Proton donor. A Glycyl lysine isopeptide (Lys-Gly) (interchain with G-Cter in SUMO2) cross-link involves residue K406. FMN contacts are provided by residues K425, H455, 487–489 (NGD), and 510–511 (AR).

This sequence belongs to the Dus family. Dus3 subfamily. FMN serves as cofactor.

It carries out the reaction 5,6-dihydrouridine(47) in tRNA + NAD(+) = uridine(47) in tRNA + NADH + H(+). The catalysed reaction is 5,6-dihydrouridine(47) in tRNA + NADP(+) = uridine(47) in tRNA + NADPH + H(+). The enzyme catalyses a 5,6-dihydrouridine in mRNA + NAD(+) = a uridine in mRNA + NADH + H(+). It catalyses the reaction a 5,6-dihydrouridine in mRNA + NADP(+) = a uridine in mRNA + NADPH + H(+). Functionally, catalyzes the synthesis of dihydrouridine, a modified base, in various RNAs, such as tRNAs, mRNAs and some long non-coding RNAs (lncRNAs). Mainly modifies the uridine in position 47 (U47) in the D-loop of most cytoplasmic tRNAs. Also able to mediate the formation of dihydrouridine in some mRNAs, thereby regulating their translation. The chain is tRNA-dihydrouridine(47) synthase [NAD(P)(+)]-like from Rattus norvegicus (Rat).